A 4576-amino-acid chain; its full sequence is Mucin-2 (4576 aa).

The N-terminal stretch at 1 to 20 (MGLPLARLVAACLVLALAKG) is a signal peptide. Residue serine 21 is modified to Phosphoserine. Positions 32–205 (HVCSTWGDFH…KINKPEVQCE (174 aa)) constitute a VWFD 1 domain. Intrachain disulfides connect cysteine 34–cysteine 166, cysteine 56–cysteine 204, cysteine 64–cysteine 163, cysteine 216–cysteine 253, cysteine 223–cysteine 248, cysteine 235–cysteine 273, cysteine 255–cysteine 261, cysteine 263–cysteine 289, cysteine 293–cysteine 327, cysteine 306–cysteine 319, cysteine 310–cysteine 349, cysteine 329–cysteine 343, cysteine 351–cysteine 373, cysteine 368–cysteine 385, cysteine 371–cysteine 380, cysteine 389–cysteine 526, cysteine 411–cysteine 561, cysteine 433–cysteine 441, cysteine 572–cysteine 617, cysteine 586–cysteine 612, cysteine 599–cysteine 637, cysteine 619–cysteine 625, cysteine 627–cysteine 652, cysteine 659–cysteine 696, cysteine 672–cysteine 686, cysteine 676–cysteine 716, cysteine 698–cysteine 710, cysteine 718–cysteine 740, and cysteine 738–cysteine 747. Aspartate 46 serves as a coordination point for Ca(2+). Cu(+) is bound by residues methionine 143 and methionine 151. A Cu(2+)-binding site is contributed by glutamate 153. N-linked (GlcNAc...) asparagine glycosylation occurs at asparagine 160. Ca(2+)-binding residues include aspartate 168, asparagine 170, and glutamate 177. Histidine 275 contributes to the Cu(2+) binding site. A TIL domain is found at 293-349 (CPNNMVYLESSSPCVDTCSHLEVSSLCEEHYMDGCFCPEGTVYDDITGSGCIPVSQC). Histidine 322 contributes to the Cu(2+) binding site. Methionine 324 is a Cu(+) binding site. Residues 387–562 (ETCALEGGSH…NTWKAQSSCH (176 aa)) enclose the VWFD 2 domain. Aspartate 401 is a Ca(2+) binding site. Asparagine 421 is a glycosylation site (N-linked (GlcNAc...) asparagine). Residues asparagine 528, asparagine 530, leucine 532, aspartate 535, and aspartate 536 each coordinate Ca(2+). Asparagine 668 carries an N-linked (GlcNAc...) asparagine glycan. Residue asparagine 768 is glycosylated (N-linked (GlcNAc...) asparagine). Disulfide bonds link cysteine 782–cysteine 818, cysteine 800–cysteine 812, cysteine 820–cysteine 843, cysteine 837–cysteine 855, cysteine 841–cysteine 850, cysteine 859–cysteine 990, cysteine 881–cysteine 1025, cysteine 890–cysteine 987, cysteine 907–cysteine 914, cysteine 1035–cysteine 1078, cysteine 1049–cysteine 1073, cysteine 1060–cysteine 1100, cysteine 1080–cysteine 1088, cysteine 1090–cysteine 1115, cysteine 1106–cysteine 1135, cysteine 1119–cysteine 1161, cysteine 1143–cysteine 1185, cysteine 1165–cysteine 1179, cysteine 1187–cysteine 1211, cysteine 1206–cysteine 1236, and cysteine 1209–cysteine 1219. Residue asparagine 838 is glycosylated (N-linked (GlcNAc...) asparagine). In terms of domain architecture, VWFD 3 spans 857–1026 (STCSIYGSGH…NSWKEASTCP (170 aa)). Position 871 (aspartate 871) interacts with Ca(2+). An N-linked (GlcNAc...) asparagine glycan is attached at asparagine 893. Ca(2+) contacts are provided by asparagine 992, aspartate 994, asparagine 999, and aspartate 1000. 2 N-linked (GlcNAc...) asparagine glycosylation sites follow: asparagine 1137 and asparagine 1152. Asparagine 1213, asparagine 1228, and asparagine 1244 each carry an N-linked (GlcNAc...) asparagine glycan. Residues threonine 1265, threonine 1268, threonine 1269, threonine 1281, and threonine 1292 are each glycosylated (O-linked (GalNAc) threonine). Residues asparagine 1305, histidine 1308, glycine 1315, aspartate 1316, and glutamate 1318 each contribute to the Ca(2+) site. Residue asparagine 1352 is glycosylated (N-linked (GlcNAc...) asparagine). Ca(2+)-binding residues include aspartate 1375 and tyrosine 1376. 5 consecutive repeat copies span residues 1395–1415 (SPTT…PTTL), 1416–1427 (PTSSPVTSSATL), 1428–1437 (PTTSSITSTI), 1438–1453 (SPTT…SPTT), and 1454–1460 (SPTTSPT). The tract at residues 1395–2866 (SPTTSTTTLS…PTTSSTFTTP (1472 aa)) is disordered. The 7B repeat unit spans residues 1478-1497 (PSTTSPTTPSTTPSTTSPTT). An 8A repeat occupies 1498-1510 (PSTTSPTTPTSTS). The 9B repeat unit spans residues 1530–1556 (SPTTSPTTPSTTSPTISTTTSTISPTT). A 10A repeat occupies 1557–1572 (PSTTSPNTPSTTSSTI). The 10B repeat unit spans residues 1573 to 1588 (PSTTSPTTPSTTSPTI). The 11A repeat unit spans residues 1589–1607 (STTTSTTSPTTPSTTSPTT). An 11B repeat occupies 1608-1634 (PSTTSPTTPSTTSPTISTTTLTTSPTT). Repeat copies occupy residues 1635–1642 (PSTTSPTT) and 1665–1681 (ISPT…LSTT). 2 N-linked (GlcNAc...) asparagine glycosylation sites follow: asparagine 2529 and asparagine 2910. Composition is skewed to low complexity over residues 2975–3623 (PSST…GSTP) and 3631–3706 (PGPT…TSPS). Positions 2975 to 3706 (PSSTTTETPT…SSTSPITSPS (732 aa)) are disordered. 3 N-linked (GlcNAc...) asparagine glycosylation sites follow: asparagine 3734, asparagine 3745, and asparagine 3756. Residues 3764 to 3774 (STPTPSTPTPT) are compositionally biased toward pro residues. The disordered stretch occupies residues 3764–3806 (STPTPSTPTPTPSQTTTPSTTSSKSTPSTPQSTSPKSTLSTPT). The segment covering 3775–3806 (PSQTTTPSTTSSKSTPSTPQSTSPKSTLSTPT) has biased composition (low complexity). N-linked (GlcNAc...) asparagine glycans are attached at residues asparagine 3823, asparagine 3830, and asparagine 3903. In terms of domain architecture, VWFD 4 spans 3880-4063 (CYCTGWGDPH…VNDPSKPHCP (184 aa)). Cystine bridges form between cysteine 3882-cysteine 4023, cysteine 3904-cysteine 4062, and cysteine 3928-cysteine 3936. Residues asparagine 3991, asparagine 4017, asparagine 4028, asparagine 4083, asparagine 4149, asparagine 4183, asparagine 4254, asparagine 4277, asparagine 4351, asparagine 4366, asparagine 4434, asparagine 4465, and asparagine 4488 are each glycosylated (N-linked (GlcNAc...) asparagine). VWFC domains are found at residues 4213–4282 (CVGP…TSCK) and 4320–4387 (GVCV…KKCQ). 4 disulfides stabilise this stretch: cysteine 4471–cysteine 4518, cysteine 4485–cysteine 4532, cysteine 4494–cysteine 4548, and cysteine 4498–cysteine 4550. Residues 4471–4556 (CSAVSVMKEI…SCLCQDTVCG (86 aa)) form the CTCK domain.

In terms of assembly, homomultimer; disulfide-linked. The N- and C-terminus mediate their assembly into higher order structures to form filaments. The CTCK domains of two polypeptides associate in the endoplasmic reticulum to generate intermolecularly disulfide-bonded dimers. These dimers progress to the Golgi apparatus, which is a more acidic environment than the endoplasmic reticulum. Under acidic conditions, the N-termini form non-covalent intermolecular interactions that juxtapose assemblies of the third VWD domain (VWD3) from different CTCK-linked dimers. The VWD3 assemblies then become disulfide bonded to one another to produce long, disulfide-linked polymers that remain highly compact until secretion. Interacts with FCGBP. Interacts with AGR2; disulfide-linked. In terms of processing, O-glycosylated. O-glycosylation is required for mucin assembly. Goblet cells synthesize two forms of mucin that differ in branched chain O-glycosylation and the site of production in the colon. Post-translationally, may undergo proteolytic cleavage in the outer mucus layer of the colon, contributing to the expanded volume and loose nature of this layer which allows for bacterial colonization in contrast to the inner mucus layer which is dense and devoid of bacteria. At low pH of 6 and under, undergoes autocatalytic cleavage in vitro in the N-terminal region of the fourth VWD domain. It is likely that this also occurs in vivo and is triggered by the low pH of the late secretory pathway. Highly expressed in goblet cells of the colon with lower levels in the small intestine and no expression in the stomach (at protein level).

Its subcellular location is the secreted. Functionally, coats the epithelia of the intestines and other mucus membrane-containing organs to provide a protective, lubricating barrier against particles and infectious agents at mucosal surfaces. Major constituent of the colon mucus, which is mainly formed by large polymeric networks of MUC2 secreted by goblet cells that cover the exposed surfaces of intestine. MUC2 networks form hydrogels that guard the underlying epithelium from pathogens and other hazardous matter entering from the outside world, while permitting nutrient absorption and gas exchange. Acts as a divalent copper chaperone that protects intestinal cells from copper toxicity and facilitates nutritional copper unptake into cells. Binds both Cu(2+) and its reduced form, Cu(1+), at two juxtaposed binding sites: Cu(2+), once reduced to Cu(1+) by vitamin C (ascorbate) or other dietary antioxidants, transits to the other binding site. MUC2-bound Cu(1+) is protected from oxidation in aerobic environments, and can be released for nutritional delivery to cells. Mucin gels store antimicrobial molecules that participate in innate immunity. Mucin glycoproteins also house and feed the microbiome, lubricate tissue surfaces, and may facilitate the removal of contaminants and waste products from the body. Goblet cells synthesize two forms of MUC2 mucin that differ in branched chain O-glycosylation and the site of production in the colon: a (1) 'thick' mucus that wraps the microbiota to form fecal pellets is produced in the proximal, ascending colon. 'Thick' mucus transits along the descending colon and is lubricated by a (2) 'thin' MUC2 mucus produced in the distal colon which adheres to the 'thick' mucus. In Mus musculus (Mouse), this protein is Mucin-2.